Consider the following 194-residue polypeptide: ATP-dependent Clp protease proteolytic subunit (194 aa).

Catalysis depends on serine 98, which acts as the Nucleophile. Histidine 123 is an active-site residue.

The protein belongs to the peptidase S14 family. In terms of assembly, fourteen ClpP subunits assemble into 2 heptameric rings which stack back to back to give a disk-like structure with a central cavity, resembling the structure of eukaryotic proteasomes.

Its subcellular location is the cytoplasm. The enzyme catalyses Hydrolysis of proteins to small peptides in the presence of ATP and magnesium. alpha-casein is the usual test substrate. In the absence of ATP, only oligopeptides shorter than five residues are hydrolyzed (such as succinyl-Leu-Tyr-|-NHMec, and Leu-Tyr-Leu-|-Tyr-Trp, in which cleavage of the -Tyr-|-Leu- and -Tyr-|-Trp bonds also occurs).. Functionally, cleaves peptides in various proteins in a process that requires ATP hydrolysis. Has a chymotrypsin-like activity. Plays a major role in the degradation of misfolded proteins. In Staphylococcus carnosus (strain TM300), this protein is ATP-dependent Clp protease proteolytic subunit.